The primary structure comprises 331 residues: Phenol 2-monooxygenase, oxygenase component DmpL (331 aa).

The protein belongs to the TmoE/XamoE family. The multicomponent enzyme phenol hydroxylase is formed by DmpL (P1 component), DmpM (P2 component), DmpN (P3 component), DmpO (P4 component) and DmpP (P5 component). The oxygenase component is a dimer composed of three subunits, DmpL, DmpN and DmpO (DmpLNO). DmpL interacts with the auxiliary protein DmpK (P0 component).

It carries out the reaction phenol + NADH + O2 + H(+) = catechol + NAD(+) + H2O. Its pathway is aromatic compound metabolism; phenol degradation. Requires DmpM for efficient turnover. The activity of DmpLNO oxygenase is inhibited by dithiothreitol (DTT) by a mechanism apparently involving H(2)O(2) generation. Its function is as follows. Part of a multicomponent enzyme which catalyzes the degradation of phenol and some of its methylated derivatives. DmpL, DmpN and DmpO form the oxygenase component of the complex. Required for growth on phenol and for in vitro phenol hydroxylase activity. This Pseudomonas sp. (strain CF600) protein is Phenol 2-monooxygenase, oxygenase component DmpL.